The sequence spans 124 residues: Small ribosomal subunit protein uS12 (124 aa).

Asp-89 carries the post-translational modification 3-methylthioaspartic acid.

Belongs to the universal ribosomal protein uS12 family. In terms of assembly, part of the 30S ribosomal subunit. Contacts proteins S8 and S17. May interact with IF1 in the 30S initiation complex.

In terms of biological role, with S4 and S5 plays an important role in translational accuracy. Its function is as follows. Interacts with and stabilizes bases of the 16S rRNA that are involved in tRNA selection in the A site and with the mRNA backbone. Located at the interface of the 30S and 50S subunits, it traverses the body of the 30S subunit contacting proteins on the other side and probably holding the rRNA structure together. The combined cluster of proteins S8, S12 and S17 appears to hold together the shoulder and platform of the 30S subunit. The chain is Small ribosomal subunit protein uS12 from Pasteurella multocida (strain Pm70).